A 142-amino-acid chain; its full sequence is Small ribosomal subunit protein uS19 (142 aa).

Ser-2 is subject to N-acetylserine. Residues Lys-24, Lys-35, and Lys-64 each participate in a glycyl lysine isopeptide (Lys-Gly) (interchain with G-Cter in ubiquitin) cross-link.

Belongs to the universal ribosomal protein uS19 family. As to quaternary structure, component of the small ribosomal subunit (SSU). Mature yeast ribosomes consist of a small (40S) and a large (60S) subunit. The 40S small subunit contains 1 molecule of ribosomal RNA (18S rRNA) and 33 different proteins (encoded by 57 genes). The large 60S subunit contains 3 rRNA molecules (25S, 5.8S and 5S rRNA) and 46 different proteins (encoded by 81 genes).

The protein resides in the cytoplasm. Its function is as follows. Component of the ribosome, a large ribonucleoprotein complex responsible for the synthesis of proteins in the cell. The small ribosomal subunit (SSU) binds messenger RNAs (mRNAs) and translates the encoded message by selecting cognate aminoacyl-transfer RNA (tRNA) molecules. The large subunit (LSU) contains the ribosomal catalytic site termed the peptidyl transferase center (PTC), which catalyzes the formation of peptide bonds, thereby polymerizing the amino acids delivered by tRNAs into a polypeptide chain. The nascent polypeptides leave the ribosome through a tunnel in the LSU and interact with protein factors that function in enzymatic processing, targeting, and the membrane insertion of nascent chains at the exit of the ribosomal tunnel. uS19 is involved in the nuclear export of the small ribosomal subunit precursor. Has a role in the late stage of the assembly of pre-40S particles within the nucleus and controls their export to the cytoplasm. The polypeptide is Small ribosomal subunit protein uS19 (Saccharomyces cerevisiae (strain ATCC 204508 / S288c) (Baker's yeast)).